We begin with the raw amino-acid sequence, 137 residues long: MRHRIKGRRLNVTSSHRQSMLANMAVALVMHEQIKTTLPKAKELRPYIEAIITKAKKADLTVRRSVLSKIKDKKAVEKIINILGVRYKDRPGGYTRIVKSGFRYGDLAPIAYIEFVDRDINAKGKKMYQDASEEIKN.

The protein belongs to the bacterial ribosomal protein bL17 family. As to quaternary structure, part of the 50S ribosomal subunit. Contacts protein L32.

This Rickettsia typhi (strain ATCC VR-144 / Wilmington) protein is Large ribosomal subunit protein bL17.